We begin with the raw amino-acid sequence, 144 residues long: Deoxyuridine 5'-triphosphate nucleotidohydrolase (144 aa).

Residues 63 to 65 (RSG), N76, 80 to 82 (TID), and K90 each bind substrate.

Belongs to the dUTPase family. Mg(2+) serves as cofactor.

It carries out the reaction dUTP + H2O = dUMP + diphosphate + H(+). It functions in the pathway pyrimidine metabolism; dUMP biosynthesis; dUMP from dCTP (dUTP route): step 2/2. This enzyme is involved in nucleotide metabolism: it produces dUMP, the immediate precursor of thymidine nucleotides and it decreases the intracellular concentration of dUTP so that uracil cannot be incorporated into DNA. The chain is Deoxyuridine 5'-triphosphate nucleotidohydrolase from Hydrogenobaculum sp. (strain Y04AAS1).